A 541-amino-acid polypeptide reads, in one-letter code: Chaperonin GroEL 2 (541 aa).

Residues 29 to 32 (TLGP), 86 to 90 (DGTTT), glycine 413, 476 to 478 (NAA), and aspartate 492 contribute to the ATP site.

Belongs to the chaperonin (HSP60) family. Forms a cylinder of 14 subunits composed of two heptameric rings stacked back-to-back. Interacts with the co-chaperonin GroES.

The protein localises to the secreted. The protein resides in the capsule. Its subcellular location is the cell surface. It is found in the cell wall. The enzyme catalyses ATP + H2O + a folded polypeptide = ADP + phosphate + an unfolded polypeptide.. In terms of biological role, together with its co-chaperonin GroES, plays an essential role in assisting protein folding. The GroEL-GroES system forms a nano-cage that allows encapsulation of the non-native substrate proteins and provides a physical environment optimized to promote and accelerate protein folding. The protein is Chaperonin GroEL 2 of Mycobacterium avium (strain 104).